Consider the following 341-residue polypeptide: GTP-binding protein REM 2 (341 aa).

A compositionally biased stretch (acidic residues) spans 1-13 (MHTDLDTDMDADT). Disordered stretches follow at residues 1–72 (MHTD…SMPV) and 84–106 (VDEL…GSGE). Over residues 18 to 32 (LCSSSSRQASPSGTP) the composition is skewed to polar residues. A Phosphoserine modification is found at S27. Over residues 43 to 54 (QKPEKLLAELDR) the composition is skewed to basic and acidic residues. Low complexity predominate over residues 94-105 (SSSGSSDSLGSG). GTP is bound by residues 122–129 (GESGVGKS), 230–233 (NKSD), and 261–262 (AA). Residues 282–309 (RGRGHAGGQRPEPSSPDGPAPPTRRESL) form a disordered region. A compositionally biased stretch (pro residues) spans 294–303 (PSSPDGPAPP). At S296 the chain carries Phosphoserine.

It belongs to the small GTPase superfamily. RGK family. Expressed in brain and kidney.

It localises to the cell membrane. Functionally, binds GTP saturably and exhibits a low intrinsic rate of GTP hydrolysis. In Rattus norvegicus (Rat), this protein is GTP-binding protein REM 2 (Rem2).